The sequence spans 352 residues: MDYQVSSPTYDIDYYTSEPCQKINVKQIAARLLPPLYSLVFIFGFVGNILVVLILINCKRLKSMTDIYLLNLAISDLLFLLTVPFWAHYAAAQWNFGNTMCQLLTGLYFIGFFSGIFFIILLTIDRYLAIVHAVFALKARTVTFGVVTSVITWVVAVFASLPGIIFTRYQREGLHYTCSSHFPYSQYQFWKNFQTLKIVILGLVLPLLVMVICYSGILKTLLRCRNEKKRHRAVRLIFTIMIVYFLFWAPYNIVLLLNTFQEFFGLNNCSSSNRLDQAMQVTETLGMTHCCINPIIYAFVGEKFRNYLLVFFQKHIAKRFCKCCSIFQQEAPERASSVYTRSTGEQETSVGL.

Topologically, residues 1 to 30 are extracellular; sequence MDYQVSSPTYDIDYYTSEPCQKINVKQIAA. Tyr3 bears the Sulfotyrosine mark. 2 O-linked (GalNAc...) serine glycosylation sites follow: Ser6 and Ser7. Residues Tyr10, Tyr14, and Tyr15 each carry the sulfotyrosine modification. Disulfide bonds link Cys20–Cys269 and Cys101–Cys178. Residues 31 to 58 form a helical membrane-spanning segment; that stretch reads RLLPPLYSLVFIFGFVGNILVVLILINC. Over 59–68 the chain is Cytoplasmic; it reads KRLKSMTDIY. The helical transmembrane segment at 69-89 threads the bilayer; that stretch reads LLNLAISDLLFLLTVPFWAHY. The Extracellular segment spans residues 90–102; the sequence is AAAQWNFGNTMCQ. The helical transmembrane segment at 103–124 threads the bilayer; sequence LLTGLYFIGFFSGIFFIILLTI. Topologically, residues 125–141 are cytoplasmic; that stretch reads DRYLAIVHAVFALKART. The helical transmembrane segment at 142 to 166 threads the bilayer; it reads VTFGVVTSVITWVVAVFASLPGIIF. Topologically, residues 167-198 are extracellular; the sequence is TRYQREGLHYTCSSHFPYSQYQFWKNFQTLKI. Residues 199 to 218 traverse the membrane as a helical segment; the sequence is VILGLVLPLLVMVICYSGIL. Topologically, residues 219 to 235 are cytoplasmic; that stretch reads KTLLRCRNEKKRHRAVR. The helical transmembrane segment at 236-260 threads the bilayer; it reads LIFTIMIVYFLFWAPYNIVLLLNTF. Topologically, residues 261-277 are extracellular; that stretch reads QEFFGLNNCSSSNRLDQ. Residues 278-301 traverse the membrane as a helical segment; the sequence is AMQVTETLGMTHCCINPIIYAFVG. At 302–352 the chain is on the cytoplasmic side; sequence EKFRNYLLVFFQKHIAKRFCKCCSIFQQEAPERASSVYTRSTGEQETSVGL. S-palmitoyl cysteine attachment occurs at residues Cys321, Cys323, and Cys324. A phosphoserine; by BARK1 mark is found at Ser336, Ser337, Ser342, and Ser349.

This sequence belongs to the G-protein coupled receptor 1 family. Interacts with PRAF2. Efficient ligand binding to CCL3/MIP-1alpha and CCL4/MIP-1beta requires sulfation, O-glycosylation and sialic acid modifications. Glycosylation on Ser-6 is required for efficient binding of CCL4. Interacts with GRK2. Interacts with ARRB1 and ARRB2. Interacts with CNIH4. Interacts with S100A4; this interaction stimulates T-lymphocyte chemotaxis. Post-translationally, sulfated on at least 2 of the N-terminal tyrosines. Sulfation is required for efficient binding of the chemokines, CCL3 and CCL4. Palmitoylation in the C-terminal is important for cell surface expression. In terms of processing, phosphorylation on serine residues in the C-terminal is stimulated by binding CC chemokines especially by APO-RANTES. Post-translationally, O-glycosylated, but not N-glycosylated. Ser-6 appears to be the major site even if Ser-7 may be also O-glycosylated. Also sialylated glycans present which contribute to chemokine binding. Thr-16 and Ser-17 may also be glycosylated and, if so, with small moieties such as a T-antigen.

The protein localises to the cell membrane. Functionally, receptor for a number of inflammatory CC-chemokines including CCL3/MIP-1-alpha, CCL4/MIP-1-beta and RANTES and subsequently transduces a signal by increasing the intracellular calcium ion level. May play a role in the control of granulocytic lineage proliferation or differentiation. Participates in T-lymphocyte migration to the infection site by acting as a chemotactic receptor. The protein is C-C chemokine receptor type 5 (CCR5) of Erythrocebus patas (Red guenon).